An 883-amino-acid chain; its full sequence is DNA mismatch repair protein MutS (883 aa).

ATP is bound at residue G602–S609.

It belongs to the DNA mismatch repair MutS family.

In terms of biological role, this protein is involved in the repair of mismatches in DNA. It is possible that it carries out the mismatch recognition step. This protein has a weak ATPase activity. The polypeptide is DNA mismatch repair protein MutS (Staphylococcus haemolyticus (strain JCSC1435)).